A 524-amino-acid polypeptide reads, in one-letter code: MSDNGELEDKPPAPPVRMSSTIFSTGGKDPLSANHSLKPLPSVPEEKKPRHKIISIFSGTEKGSKKKEKERPEISPPSDFEHTIHVGFDAVTGEFTGMPEQWARLLQTSNITKLEQKKNPQAVLDVLKFYDSNTVKQKYLSFTPPEKDGFPSGTPALNAKGTEAPAVVTEEEDDDEETAPPVIAPRPDHTKSIYTRSVIDPVPAPVGDSHVDGAAKSLDKQKKKTKMTDEEIMEKLRTIVSIGDPKKKYTRYEKIGQGASGTVFTATDVALGQEVAIKQINLQKQPKKELIINEILVMKELKNPNIVNFLDSYLVGDELFVVMEYLAGGSLTDVVTETCMDEAQIAAVCRECLQALEFLHANQVIHRDIKSDNVLLGMEGSVKLTDFGFCAQITPEQSKRSTMVGTPYWMAPEVVTRKAYGPKVDIWSLGIMAIEMVEGEPPYLNENPLRALYLIATNGTPELQNPEKLSPIFRDFLNRCLEMDVEKRGSAKELLQHPFLKLAKPLSSLTPLIMAAKEAMKSNR.

The tract at residues 1–81 (MSDNGELEDK…PEISPPSDFE (81 aa)) is disordered. S2 is modified (N-acetylserine). Phosphoserine is present on residues S2, S20, S55, and S58. T60 carries the phosphothreonine modification. K62 carries the N6-acetyllysine modification. Phosphoserine is present on S64. A compositionally biased stretch (basic and acidic residues) spans 67-81 (KEKERPEISPPSDFE). The GTPase-binding stretch occupies residues 69 to 112 (KERPEISPPSDFEHTIHVGFDAVTGEFTGMPEQWARLLQTSNIT). The segment at 69-137 (KERPEISPPS…KFYDSNTVKQ (69 aa)) is autoregulatory region. One can recognise a CRIB domain in the interval 74–87 (ISPPSDFEHTIHVG). N6-acetyllysine is present on K128. At T134 the chain carries Phosphothreonine. Position 139 is a phosphotyrosine (Y139). The residue at position 141 (S141) is a Phosphoserine. T143 carries the post-translational modification Phosphothreonine. 2 disordered regions span residues 143–164 (TPPE…GTEA) and 169–188 (TEEE…PRPD). S152 carries the post-translational modification Phosphoserine. 2 positions are modified to phosphothreonine: T154 and T169. Positions 169 to 178 (TEEEDDDEET) are enriched in acidic residues. S197 bears the Phosphoserine mark. G213 carries N-myristoyl glycine; in form PAK-2p34 lipidation. The Nuclear localization signal motif lies at 245 to 251 (PKKKYTR). One can recognise a Protein kinase domain in the interval 249-499 (YTRYEKIGQG…SAKELLQHPF (251 aa)). Residues 255–263 (IGQGASGTV) and K278 each bind ATP. Residue R367 is the Proton acceptor of the active site. The residue at position 402 (T402) is a Phosphothreonine; by autocatalysis.

The protein belongs to the protein kinase superfamily. STE Ser/Thr protein kinase family. STE20 subfamily. In terms of assembly, interacts tightly with GTP-bound but not GDP-bound CDC42/p21 and RAC1. Interacts with SH3MD4. Interacts with SCRIB. Interacts with ARHGEF7 and GIT1. PAK-2p34 interacts with ARHGAP10. As to quaternary structure, (Microbial infection) Interacts with and activated by HIV-1 Nef. Full-length PAK2 is autophosphorylated when activated by CDC42/p21. Following cleavage, both peptides, PAK-2p27 and PAK-2p34, become highly autophosphorylated, with PAK-2p27 being phosphorylated on serine and PAK-2p34 on threonine residues, respectively. Autophosphorylation of PAK-2p27 can occur in the absence of any effectors and is dependent on phosphorylation of Thr-402, because PAK-2p27 is acting as an exogenous substrate. Post-translationally, during apoptosis proteolytically cleaved by caspase-3 or caspase-3-like proteases to yield active PAK-2p34. In terms of processing, ubiquitinated, leading to its proteasomal degradation. PAK-2p34 is myristoylated. Ubiquitously expressed. Higher levels seen in skeletal muscle, ovary, thymus and spleen.

It localises to the cytoplasm. Its subcellular location is the nucleus. The protein resides in the perinuclear region. The protein localises to the membrane. The enzyme catalyses L-seryl-[protein] + ATP = O-phospho-L-seryl-[protein] + ADP + H(+). The catalysed reaction is L-threonyl-[protein] + ATP = O-phospho-L-threonyl-[protein] + ADP + H(+). With respect to regulation, activated by binding small G proteins. Binding of GTP-bound CDC42 or RAC1 to the autoregulatory region releases monomers from the autoinhibited dimer, enables phosphorylation of Thr-402 and allows the kinase domain to adopt an active structure. Following caspase cleavage, autophosphorylated PAK-2p34 is constitutively active. Functionally, serine/threonine protein kinase that plays a role in a variety of different signaling pathways including cytoskeleton regulation, cell motility, cell cycle progression, apoptosis or proliferation. Acts as a downstream effector of the small GTPases CDC42 and RAC1. Activation by the binding of active CDC42 and RAC1 results in a conformational change and a subsequent autophosphorylation on several serine and/or threonine residues. Full-length PAK2 stimulates cell survival and cell growth. Phosphorylates MAPK4 and MAPK6 and activates the downstream target MAPKAPK5, a regulator of F-actin polymerization and cell migration. Phosphorylates JUN and plays an important role in EGF-induced cell proliferation. Phosphorylates many other substrates including histone H4 to promote assembly of H3.3 and H4 into nucleosomes, BAD, ribosomal protein S6, or MBP. Phosphorylates CASP7, thereby preventing its activity. Additionally, associates with ARHGEF7 and GIT1 to perform kinase-independent functions such as spindle orientation control during mitosis. On the other hand, apoptotic stimuli such as DNA damage lead to caspase-mediated cleavage of PAK2, generating PAK-2p34, an active p34 fragment that translocates to the nucleus and promotes cellular apoptosis involving the JNK signaling pathway. Caspase-activated PAK2 phosphorylates MKNK1 and reduces cellular translation. This is Serine/threonine-protein kinase PAK 2 (PAK2) from Homo sapiens (Human).